We begin with the raw amino-acid sequence, 286 residues long: 5'-3' exonuclease (286 aa).

In terms of domain architecture, 5'-3' exonuclease spans 172–270 (IKPKEFIDFL…IKLKDIILKK (99 aa)).

In terms of biological role, 5'-3' exonuclease acting preferentially on double-stranded DNA. The chain is 5'-3' exonuclease from Buchnera aphidicola subsp. Acyrthosiphon pisum (strain APS) (Acyrthosiphon pisum symbiotic bacterium).